The sequence spans 341 residues: Mitochondrial ubiquitin ligase activator of nfkb 1-A (341 aa).

Residues 1-5 (MEDFP) lie on the Cytoplasmic side of the membrane. The chain crosses the membrane as a helical span at residues 6–26 (VLEMVCLGSSVALSGLFYYIY). At 27–233 (RKKRKTVDKL…LLMEQEGQAE (207 aa)) the chain is on the mitochondrial intermembrane side. A helical transmembrane segment spans residues 234-254 (VWRVFACICALAGVAVLIWTG). At 255–341 (RRYYRQLKLR…IKRVVPLYQA (87 aa)) the chain is on the cytoplasmic side. Residues 292–329 (CVICLSNPRGCVLLDCGHVCCCFRCYQALPQPFCPICR) form an RING-type zinc finger.

As to quaternary structure, homooligomer.

The protein resides in the mitochondrion outer membrane. It catalyses the reaction S-ubiquitinyl-[E2 ubiquitin-conjugating enzyme]-L-cysteine + [acceptor protein]-L-lysine = [E2 ubiquitin-conjugating enzyme]-L-cysteine + N(6)-ubiquitinyl-[acceptor protein]-L-lysine.. It participates in protein modification; protein ubiquitination. E3 ubiquitin-protein ligase that plays a role in the control of mitochondrial morphology. Promotes mitochondrial fragmentation and influences mitochondrial localization. Inhibits cell growth. E3 ubiquitin ligases accept ubiquitin from an E2 ubiquitin-conjugating enzyme in the form of a thioester and then directly transfer the ubiquitin to targeted substrates. This Danio rerio (Zebrafish) protein is Mitochondrial ubiquitin ligase activator of nfkb 1-A (mul1a).